The sequence spans 170 residues: MNVRMFSLMVGIFSVLNTTQFFIFDLNQKTHICYEAKFSIYVDSKSELVTWTLFHRANISTGLSLTTIIIGCFLFYCIHKNIYMGLLIYAMWIITYELINFSIVLLLNGIIKDHFKTLSYLHWIFQISHMLLHFFCLPFIVKHAYNLYKESQTVGRKRRHRLCSTIAVNS.

Positions 1-21 are cleaved as a signal peptide; it reads MNVRMFSLMVGIFSVLNTTQF. Over 22–58 the chain is Lumenal; sequence FIFDLNQKTHICYEAKFSIYVDSKSELVTWTLFHRAN. Residues 59–79 form a helical membrane-spanning segment; sequence ISTGLSLTTIIIGCFLFYCIH. Topologically, residues 80 to 85 are cytoplasmic; that stretch reads KNIYMG. Residues 86 to 106 traverse the membrane as a helical segment; sequence LLIYAMWIITYELINFSIVLL. Residues 107 to 120 lie on the Lumenal side of the membrane; that stretch reads LNGIIKDHFKTLSY. A helical transmembrane segment spans residues 121–141; the sequence is LHWIFQISHMLLHFFCLPFIV. The Cytoplasmic portion of the chain corresponds to 142-170; sequence KHAYNLYKESQTVGRKRRHRLCSTIAVNS.

It is found in the membrane. The chain is Transmembrane protein 217B from Homo sapiens (Human).